The following is a 1816-amino-acid chain: MFNKSFGTPFGGGTGGFGTTSTFGQNTGFGTTSGGAFGTSAFGSSNNTGGLFGNSQTKPGGLFGTSSFSQPATSTSTGFGFGTSTGTSNSLFGTANTGTSLFSSQNNAFAQNKPTGFGNFGTSTSSGGLFGTTNTTSNPFGNTSGSLFGPSSFTAAPTGTTIKFNPPTGTDTMVKAGVSTNISTKHQCITAMKEYESKSLEELRLEDYQANRKGPQNQVGAGTTTGLFGSSPATSSATGLFSSSTTNSAFSYGQNKTAFGTSTTGFGTNPGGLFGQQNQQTTSLFSKPFGQATTTPNTGFSFGNTSTLGQPSTNTMGLFGVTQASQPGGLFGTATNTSTGTAFGTGTGLFGQPNTGFGAVGSTLFGNNKLTTFGTSTTSAPSFGTTSGGLFGNKPTLTLGTNTNTSNFGFGTNNSGSSIFGSKPAAGTLGTGLGTGFGTALGAGQASLFGNNQPKIGGPLGTGAFGAPGFNTSTAILGFGAPQAPVALTDPNASAAQQAVLQQHLNSLTYSPFGDSPLFRNPMSDPKKKEERLKPTNPAAQKALTTPTHYKLTPRPATRVRPKALQTTGTAKSHLFDGLDDDEPSLANGAFMPKKSIKKLVLKNLNNSNLFSPVNHDSEDLASPSEYPENGERFSFLSKPVDENHQQDGDDDSLVSRFYTNPIAKPIPQTPESAGNKNNSSSNVEDTFIALNMRAALRNGLEGSSEETSFHDESLQDDRDEIENSAFQIHPAGIVLTKVGYYTIPSMDDLAKITNEKGECIVSDFTIGRKGYGSIYFEGDVNLTNLNLDDIVHIRRKEVIVYVDDNQKPPVGEGLNRKAEVTLDGVWPTDKTSRCLIKSPDRLADINYEGRLEAVSRKQGAQFKEYRPETGSWVFKVSHFSKYGLQDSDEEEEEHPPKTTSKKLKTAPLPPAGQATTFQMTLNGKPAPPPQSQSPEVEQLGRVVELDSDMVDITQEPVPDSVLEESVPEDQEPVSASTQIASSLGINPHVLQIMKASLLVDEEDVDAMEQRFGHFPSRGDTAQEICSPRLPISASHSSKSRSIVGGLLQSKFASGTFLSPSASVQECRTPRTSSLMNVPSTSPWSVPLPLATVFTVPSPAPEVPLKTVGIRRQPGLVPLEKSITYGKGKLLMDMALFMGRSFRVGWGPNWTLANSGEQLHGSHELENHQVAESMEYGFLPNPVAVKSLSESPFKVHLEKLGLRQRKLDEDLQLYQTPLELKLKHSTVHVDELCPLIVPNPGVSVIHGYADWVKKSPRDLLELPIVKHWSLTWTLCEALWGHLKELDSQLDEPSEYIQTLERRRAFSRWLSHTAAPQIEEEVSLTRRDSPIEAVFSYLTGSRISEACCLAQQSGDHRLALLLSQLVGSQSVRELLTMQLADWHQLQADSFIHDERLRIFALLAGKPVWQLSEQKQINVCSQLDWKRTLAIHLWYLLPPTASISRALSMYEEAFQNTCEGDKYACPPLPSYLEGSGCVVEEEKDPQRPLQDVCFHLLKLYSDRHYGLNQLLEPRSITADPLDYRLSWHLWEVLRALNYTHLSEQCEGVLQASYAGQLESEGLWEWAIFVFLHIDNSGMREKAVRELLTRHCQLSETPESWAKETFLTQKLCVPAEWIHEAKAVRAHMESNKHLEALYLFKAGHWNRCHKLVVRHLASDAIINENYDYLKGFLEDLAPPERSSLIQDWETSGLVYLDYIRVIEMLHRIQQVDCSGYELEHLHTKVTSLCNRIEQIPCYNAKDRLAQSDMAKRVANLLRVVLSLQHTPDATSNSTPDPQRVPLRLLAPHIGRLPMPEDYALEELRGLTQSYLRELTVGSQ.

An FG repeats 1 region spans residues 1 to 156; the sequence is MFNKSFGTPF…LFGPSSFTAA (156 aa). Positions 157-213 are GLEBS; interaction with RAE1; sequence PTGTTIKFNPPTGTDTMVKAGVSTNISTKHQCITAMKEYESKSLEELRLEDYQANRK. Positions 214–480 are FG repeats 2; the sequence is GPQNQVGAGT…NTSTAILGFG (267 aa). The tract at residues 512–535 is disordered; that stretch reads PFGDSPLFRNPMSDPKKKEERLKP. At Ser524 the chain carries Phosphoserine. Basic and acidic residues predominate over residues 525-534; it reads DPKKKEERLK. A Glycyl lysine isopeptide (Lys-Gly) (interchain with G-Cter in SUMO2) cross-link involves residue Lys563. Lys603 is subject to N6-acetyllysine; alternate. A Glycyl lysine isopeptide (Lys-Gly) (interchain with G-Cter in SUMO2); alternate cross-link involves residue Lys603. Residues Ser608, Ser612, Ser618, Ser623, Ser625, and Ser653 each carry the phosphoserine modification. Residues 663–682 form a disordered region; the sequence is IAKPIPQTPESAGNKNNSSS. A Glycyl lysine isopeptide (Lys-Gly) (interchain with G-Cter in SUMO2) cross-link involves residue Lys665. At Thr670 the chain carries Phosphothreonine. Residues 670 to 682 show a composition bias toward polar residues; that stretch reads TPESAGNKNNSSS. Residues Ser673, Ser680, Ser681, and Ser839 each carry the phosphoserine modification. One can recognise a Peptidase S59 domain in the interval 738–880; it reads KVGYYTIPSM…GSWVFKVSHF (143 aa). The Nucleophile role is filled by Ser881. The segment at 886–937 is disordered; it reads QDSDEEEEEHPPKTTSKKLKTAPLPPAGQATTFQMTLNGKPAPPPQSQSPEV. Ser888, Ser934, Ser1027, Ser1042, Ser1059, and Ser1063 each carry phosphoserine. Thr1069 is subject to Phosphothreonine. Phosphoserine is present on Ser1328. Residue Thr1771 is modified to Phosphothreonine.

Belongs to the nucleoporin GLFG family. In terms of assembly, part of the nuclear pore complex (NPC). Interacts directly with NUP96. Part of the Nup160 subcomplex in the nuclear pore which is composed of NUP160, NUP133, NUP107 and NUP96; this complex plays a role in RNA export and in tethering NUP98 and NUP153 to the nucleus. Interacts with RAE1. Does not interact with TPR. Interacts directly with NUP88 and NUP214, subunits of the cytoplasmic filaments of the NPC. Interacts (via N-terminus) with DHX9 (via DRBM, OB-fold and RGG domains); this interaction occurs in a RNA-dependent manner and stimulates DHX9-mediated ATPase activity. In terms of processing, the N-terminus is blocked. Post-translationally, isoform 1 is autoproteolytically cleaved to yield Nup98 and Nup96 or Nup98 only, respectively. Cleaved Nup98 is necessary for the targeting of Nup98 to the nuclear pore and the interaction with Nup96.

It localises to the nucleus membrane. The protein resides in the nucleus. Its subcellular location is the nuclear pore complex. The protein localises to the nucleoplasm. Plays a role in the nuclear pore complex (NPC) assembly and/or maintenance. Involved in the bidirectional transport across the NPC. May anchor NUP153 and TPR to the NPC. Its function is as follows. Plays a role in the nuclear pore complex (NPC) assembly and/or maintenance. NUP98 and NUP96 are involved in the bidirectional transport across the NPC. May anchor NUP153 and TPR to the NPC. In cooperation with DHX9, plays a role in transcription and alternative splicing activation of a subset of genes. Involved in the localization of DHX9 in discrete intranuclear foci (GLFG-body). This Rattus norvegicus (Rat) protein is Nuclear pore complex protein Nup98-Nup96 (Nup98).